A 360-amino-acid polypeptide reads, in one-letter code: Probable protein phosphatase 2C 54 (360 aa).

The tract at residues 1-39 (MCVEESEGAERLDFGEPAAAAADAGKSKSKSPDELPSPR) is disordered. One can recognise a PPM-type phosphatase domain in the interval 65 to 325 (RSGDWSDIGG…DNLTAVLVSF (261 aa)). Mn(2+)-binding residues include aspartate 109, glycine 110, aspartate 273, and aspartate 316.

This sequence belongs to the PP2C family. It depends on Mg(2+) as a cofactor. Mn(2+) serves as cofactor.

The enzyme catalyses O-phospho-L-seryl-[protein] + H2O = L-seryl-[protein] + phosphate. It carries out the reaction O-phospho-L-threonyl-[protein] + H2O = L-threonyl-[protein] + phosphate. This chain is Probable protein phosphatase 2C 54, found in Oryza sativa subsp. japonica (Rice).